The following is a 160-amino-acid chain: Cytochrome b6-f complex subunit 4 (160 aa).

Helical transmembrane passes span 36–56 (LLYIFPVVILGTIACNVGLAV), 95–115 (LLGVLLMVSVPAGLLTVPFLE), and 131–151 (TVFLIGTAAALWLGIGATLPI).

The protein belongs to the cytochrome b family. PetD subfamily. The 4 large subunits of the cytochrome b6-f complex are cytochrome b6, subunit IV (17 kDa polypeptide, petD), cytochrome f and the Rieske protein, while the 4 small subunits are petG, petL, petM and petN. The complex functions as a dimer.

It localises to the plastid. The protein localises to the chloroplast thylakoid membrane. Component of the cytochrome b6-f complex, which mediates electron transfer between photosystem II (PSII) and photosystem I (PSI), cyclic electron flow around PSI, and state transitions. This is Cytochrome b6-f complex subunit 4 from Arabidopsis thaliana (Mouse-ear cress).